The primary structure comprises 312 residues: Zinc transporter ZitB (312 aa).

The next 6 membrane-spanning stretches (helical) occupy residues 16 to 36, 40 to 60, 81 to 101, 117 to 137, 153 to 173, and 177 to 197; these read LLIA…GGWL, LALL…FIAL, LTTL…ILIV, TPML…FWIL, LHVL…IVIL, and WTPI…RNAW.

Belongs to the cation diffusion facilitator (CDF) transporter (TC 2.A.4) family. SLC30A subfamily.

The protein resides in the cell inner membrane. Its function is as follows. Involved in zinc efflux across the cytoplasmic membrane, thus reducing zinc accumulation in the cytoplasm and rendering bacteria more resistant to zinc. It may contribute to zinc homeostasis at low concentrations of zinc. In Yersinia pseudotuberculosis serotype I (strain IP32953), this protein is Zinc transporter ZitB.